The primary structure comprises 92 residues: Acylphosphatase (92 aa).

The Acylphosphatase-like domain occupies 5 to 92 (RVKVKVNGRV…GVFERFEVRF (88 aa)). Active-site residues include Arg-20 and Asn-38.

The protein belongs to the acylphosphatase family.

The catalysed reaction is an acyl phosphate + H2O = a carboxylate + phosphate + H(+). The chain is Acylphosphatase (acyP) from Syntrophotalea carbinolica (strain DSM 2380 / NBRC 103641 / GraBd1) (Pelobacter carbinolicus).